The sequence spans 305 residues: MKKFLKVWSVLTIICMTVVVFGGALVTKTGSADGCGNSWPLCNGQLVRLTDVTPEKLIEFMHRMTTGISSIFVIVLAICAWIYMKNRRETKPLAIIAVLFLIIQALMGMAAVVWGQNPYIMALHFGISIICYASIVLLALMIFEVDRKFDARNLVMGTKLRVNIYALTIYTYLAVYTGALVRHEKASMAVPVWPFENGHFIMPTSVQDYVQYFHRLAAFILIVWLLYVTWLVFRDYRRYRVLTFSMVLSLVFIALQAVTGALSVYTGVNLYIALAHSLIITMLFALLCYLCLLASRSKSNRLRIK.

Over 1–6 the chain is Cytoplasmic; that stretch reads MKKFLK. A helical transmembrane segment spans residues 7–27; it reads VWSVLTIICMTVVVFGGALVT. Residues 28 to 63 lie on the Extracellular side of the membrane; sequence KTGSADGCGNSWPLCNGQLVRLTDVTPEKLIEFMHR. A disulfide bridge connects residues Cys35 and Cys42. Glu59 is an active-site residue. A heme o-binding site is contributed by His62. A helical transmembrane segment spans residues 64–84; sequence MTTGISSIFVIVLAICAWIYM. The Cytoplasmic segment spans residues 85–92; the sequence is KNRRETKP. A helical transmembrane segment spans residues 93–113; sequence LAIIAVLFLIIQALMGMAAVV. Residues 114–122 are Extracellular-facing; sequence WGQNPYIMA. A helical membrane pass occupies residues 123–143; sequence LHFGISIICYASIVLLALMIF. His124 is a binding site for heme o. Residues 144 to 160 lie on the Cytoplasmic side of the membrane; sequence EVDRKFDARNLVMGTKL. A helical membrane pass occupies residues 161-181; it reads RVNIYALTIYTYLAVYTGALV. At 182 to 212 the chain is on the extracellular side; the sequence is RHEKASMAVPVWPFENGHFIMPTSVQDYVQY. The helical transmembrane segment at 213 to 233 threads the bilayer; that stretch reads FHRLAAFILIVWLLYVTWLVF. His214 is a heme b binding site. Residues 234–240 lie on the Cytoplasmic side of the membrane; the sequence is RDYRRYR. Residues 241–261 form a helical membrane-spanning segment; that stretch reads VLTFSMVLSLVFIALQAVTGA. Over 262–271 the chain is Extracellular; that stretch reads LSVYTGVNLY. A helical membrane pass occupies residues 272–292; it reads IALAHSLIITMLFALLCYLCL. His276 is a binding site for heme b. Residues 293–305 are Cytoplasmic-facing; sequence LASRSKSNRLRIK.

The protein belongs to the COX15/CtaA family. Type 1 subfamily. In terms of assembly, interacts with CtaB. The cofactor is heme b.

It is found in the cell membrane. The enzyme catalyses Fe(II)-heme o + 2 A + H2O = Fe(II)-heme a + 2 AH2. Its pathway is porphyrin-containing compound metabolism; heme A biosynthesis; heme A from heme O: step 1/1. Catalyzes the conversion of heme O to heme A by two successive hydroxylations of the methyl group at C8. The first hydroxylation forms heme I, the second hydroxylation results in an unstable dihydroxymethyl group, which spontaneously dehydrates, resulting in the formyl group of heme A. This Listeria monocytogenes serovar 1/2a (strain ATCC BAA-679 / EGD-e) protein is Heme A synthase.